Here is a 696-residue protein sequence, read N- to C-terminus: MLLGALRMEERKGLMGRERDQFPVGMRVLAVDDDPVCLKVLETLLRRCQYHVTSTNQAITALKLLRENRDMFDLVISDVHMPDMDGFKLLELVGLEMDLPVIMLSVNGETKTVMKGITHGACDYLLKPVRIEELRNIWQHVVRRKFGNRERNNLDFSKECNKPQSADTDHGPYQPTCGSSDQNGRSSRKRKELHGEDDDEGDDNDYQENDEPSAAKKPRVVWSVELHRKFVAAVNQLGIDKAVPKRILELMNVEKLTRENVASHLQKYRLYLKRLGAVASQQASIVAAFGGRDPSFLHIGAFEGLQSYQPFAPSAALPSFNPHGLLTRTSAAAAFGLQELAAPSSTIQTSTGNVTVGHCLEENQQANLAQGLTAAIGQPQLQQNWIHQEGNGLSDVFSGSSLTNTLSSTLQRVPSSSLPPQELLECKQAKVSMPPSIRIPPSSSALLERTLGVSTNLGDSSISQQGALPIDGGFSADRLPLHSSFDGAVATKLDTSLAASQREIGQQGKFSVSMLVSPSDNLALAKNAKTGASSSGSTIILPLDTARHSDYLQFGGASNSLQKMDGQKQDHIQSSNIIWSSMPSTQLPSDTQIHNTQSQRLDSGSFNHNIGAHLADQTNASASILPQMKFDTRISEEKMKQKNTYDLGSSKLQGGFNSSGCNFDGLLNSIIKVEKDDLPFMDNELGCDLFPLGACI.

In terms of domain architecture, Response regulatory spans 27–142 (RVLAVDDDPV…ELRNIWQHVV (116 aa)). Asp-78 bears the 4-aspartylphosphate mark. Residues 154–214 (LDFSKECNKP…DYQENDEPSA (61 aa)) form a disordered region. Polar residues predominate over residues 176-185 (TCGSSDQNGR). Residues 195-211 (GEDDDEGDDNDYQENDE) are compositionally biased toward acidic residues. Residues 214–273 (AAKKPRVVWSVELHRKFVAAVNQLGIDKAVPKRILELMNVEKLTRENVASHLQKYRLYLK) constitute a DNA-binding region (myb-like GARP).

The protein belongs to the ARR family. Type-B subfamily. Post-translationally, two-component system major event consists of a His-to-Asp phosphorelay between a sensor histidine kinase (HK) and a response regulator (RR). In plants, the His-to-Asp phosphorelay involves an additional intermediate named Histidine-containing phosphotransfer protein (HPt). This multistep phosphorelay consists of a His-Asp-His-Asp sequential transfer of a phosphate group between first a His and an Asp of the HK protein, followed by the transfer to a conserved His of the HPt protein and finally the transfer to an Asp in the receiver domain of the RR protein.

The protein resides in the nucleus. In terms of biological role, transcriptional activator that binds specific DNA sequence. Functions as a response regulator involved in His-to-Asp phosphorelay signal transduction system. Phosphorylation of the Asp residue in the receiver domain activates the ability of the protein to promote the transcription of target genes. May directly activate some type-A response regulators in response to cytokinins. The polypeptide is Two-component response regulator ORR22 (Oryza sativa subsp. indica (Rice)).